Here is a 156-residue protein sequence, read N- to C-terminus: MNINFTLISQAMAFAIFIWFTVRFVWPPLMRAIENRQKTIAEGLAAGERGKRELELASQRSGDVVREAKQRASDIIAQAEKRAAEIVDEAKVAAREEGDRILVGAKAEVEQEVFRAKEVLRQQVAGLALAGAAKILRREVDEKAHAELLASLKAEL.

The helical transmembrane segment at 5–27 threads the bilayer; the sequence is FTLISQAMAFAIFIWFTVRFVWP.

The protein belongs to the ATPase B chain family. As to quaternary structure, F-type ATPases have 2 components, F(1) - the catalytic core - and F(0) - the membrane proton channel. F(1) has five subunits: alpha(3), beta(3), gamma(1), delta(1), epsilon(1). F(0) has three main subunits: a(1), b(2) and c(10-14). The alpha and beta chains form an alternating ring which encloses part of the gamma chain. F(1) is attached to F(0) by a central stalk formed by the gamma and epsilon chains, while a peripheral stalk is formed by the delta and b chains.

The protein resides in the cell inner membrane. F(1)F(0) ATP synthase produces ATP from ADP in the presence of a proton or sodium gradient. F-type ATPases consist of two structural domains, F(1) containing the extramembraneous catalytic core and F(0) containing the membrane proton channel, linked together by a central stalk and a peripheral stalk. During catalysis, ATP synthesis in the catalytic domain of F(1) is coupled via a rotary mechanism of the central stalk subunits to proton translocation. In terms of biological role, component of the F(0) channel, it forms part of the peripheral stalk, linking F(1) to F(0). In Nitrosospira multiformis (strain ATCC 25196 / NCIMB 11849 / C 71), this protein is ATP synthase subunit b 1.